Consider the following 139-residue polypeptide: MSIFPAQPSDKKAVEEGAAFMPRFDASGLITAIVTDARDGELLMVAHMNEEALRLTLETGIAHYWSRSRKTLWKKGETSGNLQSVVELRTDCDQDALWLKVHVAGDGPTCHTGRRSCFYRQVVSSGGKVALTMASDHDQ.

Aspartate 91 is a binding site for Mg(2+). Cysteine 92 lines the Zn(2+) pocket. Mg(2+) contacts are provided by aspartate 93 and aspartate 95. Positions 110 and 117 each coordinate Zn(2+).

It belongs to the PRA-CH family. In terms of assembly, homodimer. It depends on Mg(2+) as a cofactor. Zn(2+) is required as a cofactor.

The protein resides in the cytoplasm. The enzyme catalyses 1-(5-phospho-beta-D-ribosyl)-5'-AMP + H2O = 1-(5-phospho-beta-D-ribosyl)-5-[(5-phospho-beta-D-ribosylamino)methylideneamino]imidazole-4-carboxamide. Its pathway is amino-acid biosynthesis; L-histidine biosynthesis; L-histidine from 5-phospho-alpha-D-ribose 1-diphosphate: step 3/9. Catalyzes the hydrolysis of the adenine ring of phosphoribosyl-AMP. The sequence is that of Phosphoribosyl-AMP cyclohydrolase from Brucella abortus (strain S19).